A 1335-amino-acid chain; its full sequence is MTRTTVDELVFFVNGKKVVEKNADPETTLLVYLRRKLGLCGTKLGCGEGGCGACTVMISKYDRLQNKIVHFSVNACLTPICSLHHVAVTTVEGIGNTKKLHPVQERIAKSHGSQCGFCTPGIVMSMYTLLRNKPEPTVEEIENAFQGNLCRCTGYRPILQGFRTFAKDGGCCGGSGNNPNCCMSQTKDQTIAPSSSLFNPEDFKPLDPTQEPIFPPELLRLKDTPRKTLRFEGERVTWIQVSTMEELLDLKAQHPDAKLVVGNTEIGIEMKFKNMLFPLIICPAWILELTSVAHGPEGISFGAACPLSLVESVLADAIATLPEQRTEVFRGVMEQLRWFAGKQVKSVASIGGNIITASPISDLNPVLMASRAKLTLASRGTKRTVWMDHTFFPGYRRTLLSPEEILVSIVIPYSRKGEFFSAFKQASRREDDIAKVTSGMRVLFKPGTTEVQELSLCFGGMADRTVSALKTTPKQLSKSWNEELLQDVCAGLAEELHLAPDAPGGMVEFRRTLTLSFFFKFYLTVLQKLGRADLEGMCGKLDPTFASATLLFQKDPPANVQLFQEVPKGQSEEDMVGRPMPHLAADMQASGEAVYCDDIPRYENELSLRLVTSTRAHAKIMSIDTSEAKKVPGFVCFLTSEDVPGSNITGIFNDETVFAKDEVTCVGHIIGAVVADTPEHAHRAARGVKITYEDLPAIITIQDAIKNNSFYGPEVKIEKGDLKKGFSEADNVVSGELYIGGQEHFYLETHCTIAVPKGEAGEMELFVSTQNTMKTQSFIAKMLGVPDNRIVVRVKRMGGGFGGKETRSTLISTAVALAAYKTGRPVRCMLDRDEDMLITGGRHPFLAKYKVGFMKTGTIVALEVAHFSNGGNSEDLSRSIMERAVFHMDNAYKIPNIRGTGRICKTNLPSNTAFRGFGGPQGMLIAEYWMSEVAVTCGLPAEEVRRKNMYKEGDLTHFNQKLEGFTLPRCWDECIASSQYQARKMEVEKFNRENCWKKRGLCIIPTKFGISFTLSFLNQGGALVHVYTDGSVLLTHGGTEMGQGLHTKMVQVASRALKIPTSKIHITETSTNTVPNTSPTAASASADLNGQAIYEACQTILKRLEPFKKKNPSGSWESWVMDAYTSAVSLSATGFYKTPNLGYSFETNSGNPFHYFSYGVACSEVEIDCLTGDHKNLRTDIVMDVGSSLNPAIDIGQVEGAFVQGLGLFTMEELHYSPEGSLHTRGPSTYKIPAFGSIPIEFRVSLLRDCPNKRAIYASKAVGEPPLFLASSIFFAIKDAIRAARAQHGDSNAKQLFQLDSPATPEKIRNACVDQFTTLCATGTPENCKSWSVRI.

One can recognise a 2Fe-2S ferredoxin-type domain in the interval 7–94 (DELVFFVNGK…HVAVTTVEGI (88 aa)). Cysteine 46, cysteine 51, cysteine 54, cysteine 76, cysteine 115, cysteine 118, cysteine 150, and cysteine 152 together coordinate [2Fe-2S] cluster. Residues 231 to 416 (FEGERVTWIQ…VSIVIPYSRK (186 aa)) form the FAD-binding PCMH-type domain. FAD-binding positions include 259–266 (LVVGNTEI), phenylalanine 339, 349–353 (SIGGN), aspartate 362, leucine 406, and lysine 424. The cysteines at positions 538 and 995 are disulfide-linked. Glutamine 770 and phenylalanine 801 together coordinate Mo-molybdopterin. 2 residues coordinate substrate: glutamate 805 and arginine 883. Arginine 915 serves as a coordination point for Mo-molybdopterin. Substrate-binding residues include phenylalanine 917 and threonine 1013. Residue alanine 1082 coordinates Mo-molybdopterin. Glutamate 1264 serves as the catalytic Proton acceptor.

This sequence belongs to the xanthine dehydrogenase family. In terms of assembly, homodimer. Interacts with BTN1A1. FAD serves as cofactor. It depends on Mo-molybdopterin as a cofactor. Requires [2Fe-2S] cluster as cofactor. In terms of processing, subject to partial proteolysis; this alters the enzyme from the dehydrogenase form (D) to the oxidase form (O). Post-translationally, contains sulfhydryl groups that are easily oxidized (in vitro); this alters the enzyme from the dehydrogenase form (D) to the oxidase form (O).

Its subcellular location is the cytoplasm. It localises to the peroxisome. The protein resides in the secreted. It carries out the reaction xanthine + NAD(+) + H2O = urate + NADH + H(+). The catalysed reaction is hypoxanthine + NAD(+) + H2O = xanthine + NADH + H(+). It catalyses the reaction xanthine + O2 + H2O = urate + H2O2. Can be converted from the dehydrogenase form (D) to the oxidase form (O) irreversibly by proteolysis or reversibly through the oxidation of sulfhydryl groups. Functionally, key enzyme in purine degradation. Catalyzes the oxidation of hypoxanthine to xanthine. Catalyzes the oxidation of xanthine to uric acid. Contributes to the generation of reactive oxygen species. This Mus musculus (Mouse) protein is Xanthine dehydrogenase/oxidase (Xdh).